The primary structure comprises 141 residues: High mobility group B protein 3 (141 aa).

2 stretches are compositionally biased toward basic and acidic residues: residues 1 to 12 and 70 to 110; these read MKGAKSKAETRS and GGEK…LEEG. Disordered stretches follow at residues 1–40 and 54–141; these read MKGA…RPSS and KEEH…EDDD. The HMG box DNA-binding region spans 35-104; the sequence is PKRPSSAFFV…EYEKNMKAYN (70 aa). Ser-122 carries the phosphoserine modification. Residues 124-141 are compositionally biased toward acidic residues; the sequence is VNDEDDAEDGSEEEEDDD.

This sequence belongs to the HMGB family. In terms of tissue distribution, expressed in lateral roots, root tips, stems, cotyledons, leaves and flowers (excluding ovary and pedicels).

The protein localises to the nucleus. Its subcellular location is the cytoplasm. It localises to the cytosol. In terms of biological role, binds preferentially double-stranded DNA. The polypeptide is High mobility group B protein 3 (HMGB3) (Arabidopsis thaliana (Mouse-ear cress)).